The sequence spans 309 residues: DSC E3 ubiquitin ligase complex subunit C (309 aa).

An N-linked (GlcNAc...) asparagine glycan is attached at asparagine 61. Disordered regions lie at residues 88–110 (LPPS…GKGK) and 148–177 (EQAD…FDRL). 2 consecutive transmembrane segments (helical) span residues 257 to 277 (DDML…AMWL) and 289 to 309 (GLAV…RIMN).

Belongs to the dsc3 family. Component of the DSC E3 ubiquitin ligase complex composed of dscA, dscB, dscC and dscD.

The protein resides in the endoplasmic reticulum membrane. It participates in protein modification; protein ubiquitination. Its function is as follows. Component of the DSC E3 ubiquitin ligase complex which is required for the srbA transcriptional activator proteolytic cleavage to release the soluble transcription factor from the membrane in low oxygen or sterol conditions. Required for growth during hypoxia and triazole drug susceptibility, as well as for virulence in a murine model of invasive pulmonary aspergillosis (IPA). In Aspergillus fumigatus (strain ATCC MYA-4609 / CBS 101355 / FGSC A1100 / Af293) (Neosartorya fumigata), this protein is DSC E3 ubiquitin ligase complex subunit C.